We begin with the raw amino-acid sequence, 39 residues long: Small basic protein 1 (39 aa).

Residue Q1 is modified to Pyrrolidone carboxylic acid. 3 cysteine pairs are disulfide-bonded: C6–C32, C10–C26, and C14–C31.

It is found in the secreted. This is Small basic protein 1 from Anas platyrhynchos (Mallard).